The chain runs to 101 residues: Chaperone modulatory protein CbpM (101 aa).

This sequence belongs to the CbpM family.

In terms of biological role, interacts with CbpA and inhibits both the DnaJ-like co-chaperone activity and the DNA binding activity of CbpA. Together with CbpA, modulates the activity of the DnaK chaperone system. Does not inhibit the co-chaperone activity of DnaJ. The sequence is that of Chaperone modulatory protein CbpM from Salmonella paratyphi A (strain ATCC 9150 / SARB42).